A 96-amino-acid polypeptide reads, in one-letter code: Co-chaperonin GroES (96 aa).

The protein belongs to the GroES chaperonin family. In terms of assembly, heptamer of 7 subunits arranged in a ring. Interacts with the chaperonin GroEL.

The protein resides in the cytoplasm. In terms of biological role, together with the chaperonin GroEL, plays an essential role in assisting protein folding. The GroEL-GroES system forms a nano-cage that allows encapsulation of the non-native substrate proteins and provides a physical environment optimized to promote and accelerate protein folding. GroES binds to the apical surface of the GroEL ring, thereby capping the opening of the GroEL channel. In Shewanella amazonensis (strain ATCC BAA-1098 / SB2B), this protein is Co-chaperonin GroES.